A 496-amino-acid chain; its full sequence is MHAKSLTELRAALDAKECSAVELAQHYLKRIDAARDLNAFVHVDAELTLAQAKAADAALANGEAGPLAGLPIAHKDVFVTRGWRSTAGSKMLANYASPFDATVVARLSAAGMVTLGKTNMDEFAMGSSNENSAFGPVKNPWDTSAVPGGSSGGSSAAVAAGLAPAATGTDTGGSIRQPASFAGVTGIKPTYGRVSRYGMIAFASSLDQGGPMARSAADCALLLNAMAGFDERDSTSLERADEDYTRHLGKAWAAGGDAGKPLAGLRIGLPAEYFGAGLADDVRAAIDAALKTYEALGATLVPVSLPKTELSIPVYYVIAPAEASSNLSRFDGVRYGHRAAEYRDLLDMYKKSRAEGFGPEVKRRILVGTYVLSHGYYDAYYLQAQKIRRIIAQDFQEAFKSCDVIMGPASPTVAWDIGAKGDDPVQMYLADIYTLSVSLAGLPGMSVPCGFGAGANAKRPVGLQIIGNYFDEARMLQVADAFQRATDWHVQEPAGV.

Residues Lys75 and Ser150 each act as charge relay system in the active site. Catalysis depends on Ser174, which acts as the Acyl-ester intermediate.

This sequence belongs to the amidase family. GatA subfamily. As to quaternary structure, heterotrimer of A, B and C subunits.

The catalysed reaction is L-glutamyl-tRNA(Gln) + L-glutamine + ATP + H2O = L-glutaminyl-tRNA(Gln) + L-glutamate + ADP + phosphate + H(+). Its function is as follows. Allows the formation of correctly charged Gln-tRNA(Gln) through the transamidation of misacylated Glu-tRNA(Gln) in organisms which lack glutaminyl-tRNA synthetase. The reaction takes place in the presence of glutamine and ATP through an activated gamma-phospho-Glu-tRNA(Gln). The chain is Glutamyl-tRNA(Gln) amidotransferase subunit A from Burkholderia pseudomallei (strain 668).